The primary structure comprises 736 residues: Epithelial splicing regulatory protein 2 (736 aa).

3 consecutive RRM domains span residues 224–301, 325–405, and 659–736; these read TVIR…KATG, MIIR…RSTA, and ALVR…ACCE.

The protein belongs to the ESRP family.

The protein resides in the nucleus. In terms of biological role, mRNA splicing factor that regulates the formation of epithelial cell-specific isoforms. Specifically regulates the expression of FGFR2-IIIb, an epithelial cell-specific isoform of fgfr2. Acts by directly binding specific sequences in mRNAs. Binds the GU-rich sequence motifs in the ISE/ISS-3, a cis-element regulatory region present in the mRNA of fgfr2. This is Epithelial splicing regulatory protein 2 (esrp2) from Danio rerio (Zebrafish).